We begin with the raw amino-acid sequence, 104 residues long: Naphthalene 1,2-dioxygenase/salicylate 5-hydroxylase systems, ferredoxin component (104 aa).

The region spanning 6–101 (IDAACLDDIP…VKIENMRVML (96 aa)) is the Rieske domain. 4 residues coordinate [2Fe-2S] cluster: C45, H47, C64, and H67.

Belongs to the bacterial ring-hydroxylating dioxygenase ferredoxin component family. In terms of assembly, ferredoxin NagAb belongs to both the salicylate 5-hydroxylase (S5H) and the naphthalene 1,2-dioxygenase (NDO) multicomponent enzyme systems. The NDO multicomponent enzyme system is composed of an electron transfer component and a dioxygenase component (iron sulfur protein (ISP)). The electron transfer component is composed of a ferredoxin reductase (NagAa) and a ferredoxin (NagAb), and the dioxygenase component is formed by a large alpha subunit (NagAc) and a small beta subunit (NagAd). The S5H multicomponent enzyme system is composed of an electron transfer component and a monooxygenase component. The electron transfer component is composed of a ferredoxin reductase (NagAa) and a ferredoxin (NagAb), and the monooxygenase component is formed by a large subunit (NagG) and a small subunit (NagH). Requires [2Fe-2S] cluster as cofactor.

It participates in aromatic compound metabolism; naphthalene degradation. Its function is as follows. Component of two multicomponent enzyme systems which are involved in the catabolism of naphthalene. Plays a role as an electron transfer component for both salicylate 5-hydroxylase (S5H) and naphthalene 1,2-dioxygenase (NDO) systems, by transferring electrons to the oxygenase components. The chain is Naphthalene 1,2-dioxygenase/salicylate 5-hydroxylase systems, ferredoxin component from Ralstonia sp.